The chain runs to 234 residues: Nuclear ubiquitous casein and cyclin-dependent kinase substrate 1 (234 aa).

The disordered stretch occupies residues 1–234 (MSRPVRNRKV…SEDEASSGED (234 aa)). Tyr-13 is modified (phosphotyrosine). Residues Ser-14 and Ser-19 each carry the phosphoserine modification. Tyr-26 is subject to Phosphotyrosine. The segment covering 35–51 (KKIRSSPREAKNKRRSG) has biased composition (basic residues). Phosphoserine occurs at positions 54, 58, 61, 73, 75, and 79. A compositionally biased stretch (basic and acidic residues) spans 64-77 (KDVKTKKDDSHSAE). Residues 91 to 100 (QQRQAASKAA) show a composition bias toward low complexity. Acidic residues predominate over residues 111–124 (VGSEEEPEEDDEAP). Phosphoserine occurs at positions 113, 130, 132, and 144. Residues 132 to 145 (SDEDFLMEDDDDSD) are compositionally biased toward acidic residues. A compositionally biased stretch (basic residues) spans 149-174 (SKKKNKKMVKKSKPERKEKKMPKPRL). At Thr-179 the chain carries Phosphothreonine. Ser-181 is subject to Phosphoserine. A compositionally biased stretch (basic residues) spans 185–199 (GKAKVGRPTASKKSK). Thr-202 is modified (phosphothreonine). Phosphoserine occurs at positions 204, 214, 225, and 231. Over residues 223–234 (EGSEDEASSGED) the composition is skewed to acidic residues.

Does not interact with RAD51. Phosphorylated in an ATM-dependent manner in response to DNA damage. Phosphorylated by CDK1 and casein kinase.

It localises to the nucleus. Its subcellular location is the chromosome. Chromatin-associated protein involved in DNA repair by promoting homologous recombination (HR). Binds double-stranded DNA (dsDNA) and secondary DNA structures, such as D-loop structures, but with less affinity than RAD51AP1. The sequence is that of Nuclear ubiquitous casein and cyclin-dependent kinase substrate 1 (Nucks1) from Mus musculus (Mouse).